Here is a 396-residue protein sequence, read N- to C-terminus: Acetylornithine aminotransferase 2 (396 aa).

Pyridoxal 5'-phosphate-binding positions include 102-103 and Phe-134; that span reads GA. Residue Arg-137 coordinates N(2)-acetyl-L-ornithine. Residue 219-222 coordinates pyridoxal 5'-phosphate; the sequence is DEVQ. Lys-248 carries the N6-(pyridoxal phosphate)lysine modification. Thr-276 provides a ligand contact to pyridoxal 5'-phosphate.

It belongs to the class-III pyridoxal-phosphate-dependent aminotransferase family. ArgD subfamily. As to quaternary structure, homodimer. It depends on pyridoxal 5'-phosphate as a cofactor.

Its subcellular location is the cytoplasm. It catalyses the reaction N(2)-acetyl-L-ornithine + 2-oxoglutarate = N-acetyl-L-glutamate 5-semialdehyde + L-glutamate. It participates in amino-acid biosynthesis; L-arginine biosynthesis; N(2)-acetyl-L-ornithine from L-glutamate: step 4/4. The polypeptide is Acetylornithine aminotransferase 2 (Bordetella bronchiseptica (strain ATCC BAA-588 / NCTC 13252 / RB50) (Alcaligenes bronchisepticus)).